The primary structure comprises 547 residues: Chaperonin GroEL (547 aa).

Residues 30–33 (TLGP), Lys51, 87–91 (DGTTT), Gly416, 480–482 (NAA), and Asp496 contribute to the ATP site.

Belongs to the chaperonin (HSP60) family. In terms of assembly, forms a cylinder of 14 subunits composed of two heptameric rings stacked back-to-back. Interacts with the co-chaperonin GroES.

It is found in the cytoplasm. The enzyme catalyses ATP + H2O + a folded polypeptide = ADP + phosphate + an unfolded polypeptide.. In terms of biological role, together with its co-chaperonin GroES, plays an essential role in assisting protein folding. The GroEL-GroES system forms a nano-cage that allows encapsulation of the non-native substrate proteins and provides a physical environment optimized to promote and accelerate protein folding. This is Chaperonin GroEL from Pseudoalteromonas translucida (strain TAC 125).